Reading from the N-terminus, the 421-residue chain is 3-isopropylmalate dehydratase large subunit (421 aa).

[4Fe-4S] cluster contacts are provided by Cys302, Cys362, and Cys365.

It belongs to the aconitase/IPM isomerase family. LeuC type 2 subfamily. In terms of assembly, heterodimer of LeuC and LeuD. It depends on [4Fe-4S] cluster as a cofactor.

The catalysed reaction is (2R,3S)-3-isopropylmalate = (2S)-2-isopropylmalate. The protein operates within amino-acid biosynthesis; L-leucine biosynthesis; L-leucine from 3-methyl-2-oxobutanoate: step 2/4. Functionally, catalyzes the isomerization between 2-isopropylmalate and 3-isopropylmalate, via the formation of 2-isopropylmaleate. This is 3-isopropylmalate dehydratase large subunit from Campylobacter fetus subsp. fetus (strain 82-40).